The primary structure comprises 211 residues: Endoplasmic reticulum vesicle protein 25 (211 aa).

An N-terminal signal peptide occupies residues 1–19; it reads MKSIVSVLTLLLLINAVAA. The Lumenal portion of the chain corresponds to 20 to 180; sequence LRFVLPAKDK…TNESTNRRVK (161 aa). The region spanning 33–121 is the GOLD domain; that stretch reads PFCVRDFVKN…TKEIDLSVAI (89 aa). Residues 181-201 form a helical membrane-spanning segment; that stretch reads FFSVGITLALIALGVWQIIYL. The Cytoplasmic segment spans residues 202 to 211; that stretch reads RSYFRSKHII.

It belongs to the EMP24/GP25L family.

Its subcellular location is the endoplasmic reticulum membrane. It localises to the golgi apparatus membrane. Its function is as follows. Constituent of COPII-coated endoplasmic reticulum-derived transport vesicles. Required for efficient transport of a subset of secretory proteins to the Golgi. Facilitates retrograde transport from the Golgi to the endoplasmic reticulum. This chain is Endoplasmic reticulum vesicle protein 25 (ERV25), found in Yarrowia lipolytica (strain CLIB 122 / E 150) (Yeast).